The chain runs to 295 residues: Large ribosomal subunit protein uL18 (295 aa).

Positions Pro-251 to Gly-261 are enriched in basic and acidic residues. The segment at Pro-251–Gly-295 is disordered. Residues Lys-262 to Met-271 are compositionally biased toward basic residues.

It belongs to the universal ribosomal protein uL18 family. Component of the large ribosomal subunit (LSU).

The protein resides in the cytoplasm. It is found in the nucleus. In terms of biological role, component of the ribosome, a large ribonucleoprotein complex responsible for the synthesis of proteins in the cell. The small ribosomal subunit (SSU) binds messenger RNAs (mRNAs) and translates the encoded message by selecting cognate aminoacyl-transfer RNA (tRNA) molecules. The large subunit (LSU) contains the ribosomal catalytic site termed the peptidyl transferase center (PTC), which catalyzes the formation of peptide bonds, thereby polymerizing the amino acids delivered by tRNAs into a polypeptide chain. The nascent polypeptides leave the ribosome through a tunnel in the LSU and interact with protein factors that function in enzymatic processing, targeting, and the membrane insertion of nascent chains at the exit of the ribosomal tunnel. This is Large ribosomal subunit protein uL18 (RPL5) from Styela clava (Sea squirt).